Reading from the N-terminus, the 2517-residue chain is Serine/threonine-protein kinase ATR (2517 aa).

The HEAT repeat unit spans residues 1178-1214 (EPMLEQIVNVLMAGCQHDDSQLQMASAKCLGELGAID). In terms of domain architecture, FAT spans 1509-2066 (LVSRASYNCG…LWMLLPHFKS (558 aa)). Residue Ser1569 is modified to Phosphoserine. Tyr1570 carries the post-translational modification Phosphotyrosine. Ser1573 carries the post-translational modification Phosphoserine. Residue Thr1575 is modified to Phosphothreonine. The PI3K/PI4K catalytic domain occupies 2184 to 2508 (FQESVLILRS…EATKVDNLAS (325 aa)). The tract at residues 2190-2196 (ILRSAAK) is G-loop. The segment at 2360–2368 (GLGDRHGEN) is catalytic loop. Positions 2380–2404 (HVDFNCLFNQGELLPYPEVVPFRLT) are activation loop. The 33-residue stretch at 2485–2517 (IPLSTEGQVNFLINEATKVDNLASMYIGWGAFL) folds into the FATC domain.

The protein belongs to the PI3/PI4-kinase family. ATM subfamily. Interacts with mus304. Mn(2+) serves as cofactor.

It localises to the nucleus. The enzyme catalyses L-seryl-[protein] + ATP = O-phospho-L-seryl-[protein] + ADP + H(+). It catalyses the reaction L-threonyl-[protein] + ATP = O-phospho-L-threonyl-[protein] + ADP + H(+). Functionally, serine/threonine protein kinase which activates checkpoint signaling upon genotoxic stresses such as ionizing radiation (IR), ultraviolet light (UV), or DNA replication stalling, thereby acting as a DNA damage sensor. Recognizes the substrate consensus sequence [ST]-Q. Phosphorylates various proteins, which collectively inhibits DNA replication and mitosis and promotes DNA repair and recombination. Phosphorylates grp/CHK1. Phosphorylates 'Ser-137' of histone variant H2AX/H2AV at sites of DNA damage, thereby regulating DNA damage response mechanism. Essential for the DNA damage checkpoint in larval imaginal disks and neuroblasts and for the DNA replication checkpoint in the embryo. Also has an essential role during early nuclear divisions in embryos, where it is required to delay mitosis in response to incomplete DNA replication. Also plays an important role during meiosis, where it may monitor double-strand-break repair during meiotic crossing over, to regulate the progression of prophase I, and to enforce metaphase I delay observed at the end of oogenesis. Involved in telomere maintenance and prevention of telomere fusion; potentially functioning downstream of moi/modigliani. The sequence is that of Serine/threonine-protein kinase ATR (mei-41) from Drosophila melanogaster (Fruit fly).